The chain runs to 341 residues: Phenylalanine--tRNA ligase alpha subunit (341 aa).

E254 provides a ligand contact to Mg(2+).

This sequence belongs to the class-II aminoacyl-tRNA synthetase family. Phe-tRNA synthetase alpha subunit type 1 subfamily. In terms of assembly, tetramer of two alpha and two beta subunits. Mg(2+) is required as a cofactor.

It is found in the cytoplasm. The enzyme catalyses tRNA(Phe) + L-phenylalanine + ATP = L-phenylalanyl-tRNA(Phe) + AMP + diphosphate + H(+). This is Phenylalanine--tRNA ligase alpha subunit from Chlorobium phaeovibrioides (strain DSM 265 / 1930) (Prosthecochloris vibrioformis (strain DSM 265)).